We begin with the raw amino-acid sequence, 318 residues long: Tyrosine recombinase XerC (318 aa).

The region spanning Pro17 to Glu108 is the Core-binding (CB) domain. The region spanning Ser129–Asp312 is the Tyr recombinase domain. Catalysis depends on residues Arg172, Lys196, His264, Arg267, and His290. Residue Tyr299 is the O-(3'-phospho-DNA)-tyrosine intermediate of the active site.

This sequence belongs to the 'phage' integrase family. XerC subfamily. As to quaternary structure, forms a cyclic heterotetrameric complex composed of two molecules of XerC and two molecules of XerD.

It localises to the cytoplasm. Site-specific tyrosine recombinase, which acts by catalyzing the cutting and rejoining of the recombining DNA molecules. The XerC-XerD complex is essential to convert dimers of the bacterial chromosome into monomers to permit their segregation at cell division. It also contributes to the segregational stability of plasmids. The protein is Tyrosine recombinase XerC of Rhizobium meliloti (strain 1021) (Ensifer meliloti).